A 295-amino-acid chain; its full sequence is Succinate dehydrogenase [ubiquinone] iron-sulfur subunit, mitochondrial (295 aa).

Positions 67–144 (EKPRLQSYTL…DTKIYPLPHM (78 aa)) constitute a 2Fe-2S ferredoxin-type domain. [2Fe-2S] cluster contacts are provided by Cys-106, Cys-111, Cys-114, and Cys-126. The 31-residue stretch at 185-215 (ERRRLDGLYECILCACCSTSCPSYWWNQDEY) folds into the 4Fe-4S ferredoxin-type domain. The [4Fe-4S] cluster site is built by Cys-195, Cys-198, and Cys-201. Cys-205 lines the [3Fe-4S] cluster pocket. Trp-210 is an a ubiquinone binding site. [3Fe-4S] cluster is bound by residues Cys-252 and Cys-258. Cys-262 is a binding site for [4Fe-4S] cluster.

It belongs to the succinate dehydrogenase/fumarate reductase iron-sulfur protein family. As to quaternary structure, component of complex II composed of four subunits: a flavoprotein (FP), an iron-sulfur protein (IP), and a cytochrome b composed of a large and a small subunit. [2Fe-2S] cluster serves as cofactor. It depends on [3Fe-4S] cluster as a cofactor. Requires [4Fe-4S] cluster as cofactor.

The protein resides in the mitochondrion inner membrane. The catalysed reaction is a quinone + succinate = fumarate + a quinol. It functions in the pathway carbohydrate metabolism; tricarboxylic acid cycle; fumarate from succinate (eukaryal route): step 1/1. Iron-sulfur protein (IP) subunit of succinate dehydrogenase (SDH) that is involved in complex II of the mitochondrial electron transport chain and is responsible for transferring electrons from succinate to ubiquinone (coenzyme Q). This chain is Succinate dehydrogenase [ubiquinone] iron-sulfur subunit, mitochondrial (SDH2), found in Mycosarcoma maydis (Corn smut fungus).